Consider the following 426-residue polypeptide: Transcriptional enhancer factor TEF-1 (426 aa).

Methionine 1 carries the N-acetylmethionine modification. A compositionally biased stretch (polar residues) spans 1-12; that stretch reads MEPSSWSGSESP. The tract at residues 1 to 31 is disordered; it reads MEPSSWSGSESPAENMERMSDSADKPIDNDA. Position 11 is a phosphoserine (serine 11). Residues 15–28 are compositionally biased toward basic and acidic residues; it reads NMERMSDSADKPID. The segment at residues 28–104 is a DNA-binding region (TEA); it reads DNDAEGVWSP…QVLARRKSRD (77 aa). Position 108 is an N6-lactoyllysine (lysine 108). Positions 167 to 426 are transcriptional activation; the sequence is GSSQDVKPFV…QHHIYRLVKD (260 aa).

Interacts with YAP1 and WWTR1/TAZ. Post-translationally, lactylation by AARS1 promotes nuclear localization and stabilization of YAP1, leading to increased Hippo signaling pathway. Delactylated by SIRT1. As to expression, preferentially expressed in skeletal muscle. Lower levels in pancreas, placenta, and heart.

The protein localises to the nucleus. In terms of biological role, transcription factor which plays a key role in the Hippo signaling pathway, a pathway involved in organ size control and tumor suppression by restricting proliferation and promoting apoptosis. The core of this pathway is composed of a kinase cascade wherein MST1/MST2, in complex with its regulatory protein SAV1, phosphorylates and activates LATS1/2 in complex with its regulatory protein MOB1, which in turn phosphorylates and inactivates YAP1 oncoprotein and WWTR1/TAZ. Acts by mediating gene expression of YAP1 and WWTR1/TAZ, thereby regulating cell proliferation, migration and epithelial mesenchymal transition (EMT) induction. Binds specifically and cooperatively to the SPH and GT-IIC 'enhansons' (5'-GTGGAATGT-3') and activates transcription in vivo in a cell-specific manner. The activation function appears to be mediated by a limiting cell-specific transcriptional intermediary factor (TIF). Involved in cardiac development. Binds to the M-CAT motif. In Homo sapiens (Human), this protein is Transcriptional enhancer factor TEF-1 (TEAD1).